Here is a 182-residue protein sequence, read N- to C-terminus: Large ribosomal subunit protein uL5 (182 aa).

The protein belongs to the universal ribosomal protein uL5 family. In terms of assembly, part of the 50S ribosomal subunit; part of the 5S rRNA/L5/L18/L25 subcomplex. Contacts the 5S rRNA and the P site tRNA. Forms a bridge to the 30S subunit in the 70S ribosome.

Functionally, this is one of the proteins that bind and probably mediate the attachment of the 5S RNA into the large ribosomal subunit, where it forms part of the central protuberance. In the 70S ribosome it contacts protein S13 of the 30S subunit (bridge B1b), connecting the 2 subunits; this bridge is implicated in subunit movement. Contacts the P site tRNA; the 5S rRNA and some of its associated proteins might help stabilize positioning of ribosome-bound tRNAs. The sequence is that of Large ribosomal subunit protein uL5 from Borreliella burgdorferi (strain ATCC 35210 / DSM 4680 / CIP 102532 / B31) (Borrelia burgdorferi).